We begin with the raw amino-acid sequence, 448 residues long: Deoxyguanosinetriphosphate triphosphohydrolase-like protein (448 aa).

In terms of domain architecture, HD spans arginine 67 to glycine 260.

Belongs to the dGTPase family. Type 2 subfamily.

This Aliivibrio fischeri (strain ATCC 700601 / ES114) (Vibrio fischeri) protein is Deoxyguanosinetriphosphate triphosphohydrolase-like protein.